Reading from the N-terminus, the 290-residue chain is Undecaprenyl-diphosphatase 2 (290 aa).

The next 6 helical transmembrane spans lie at 104–124 (WMVIVGTLPVAVLGYLGKDLI), 128–148 (LRNLWITATMLVLFSFVFILA), 174–194 (CLALIPGVSRSGGTVSAGLFL), 205–225 (SFLLAIPAVLASGLFSLPDAF), 237–257 (QLFVGTAIAFAVGYASIAWLL), and 268–288 (FALWRIPLGLAVMGLLAFGVL).

The protein belongs to the UppP family.

It localises to the cell membrane. It catalyses the reaction di-trans,octa-cis-undecaprenyl diphosphate + H2O = di-trans,octa-cis-undecaprenyl phosphate + phosphate + H(+). Catalyzes the dephosphorylation of undecaprenyl diphosphate (UPP). Confers resistance to bacitracin. In Corynebacterium jeikeium (strain K411), this protein is Undecaprenyl-diphosphatase 2.